The sequence spans 28 residues: Chaperonin GroEL (28 aa).

The protein belongs to the chaperonin (HSP60) family. In terms of assembly, forms a cylinder of 14 subunits composed of two heptameric rings stacked back-to-back. Interacts with the co-chaperonin GroES.

The protein localises to the cytoplasm. It catalyses the reaction ATP + H2O + a folded polypeptide = ADP + phosphate + an unfolded polypeptide.. Together with its co-chaperonin GroES, plays an essential role in assisting protein folding. The GroEL-GroES system forms a nano-cage that allows encapsulation of the non-native substrate proteins and provides a physical environment optimized to promote and accelerate protein folding. The polypeptide is Chaperonin GroEL (Mycolicibacterium smegmatis (Mycobacterium smegmatis)).